The sequence spans 201 residues: Homeobox protein ceh-28 (201 aa).

The span at 72 to 84 (SYYSSPSQNQRSY) shows a compositional bias: polar residues. Residues 72–94 (SYYSSPSQNQRSYQNHRQHSNPD) form a disordered region. Residues 104 to 163 (KRKPRVLFTQHQVNELEERFKKQRYVTATEREELAQCLGLTATQVKIWFQNRRYKCKRLA) constitute a DNA-binding region (homeobox).

Belongs to the NK-2 homeobox family.

It localises to the nucleus. Functionally, probable transcription factor that regulates neuronal differention, including synapse assembly of the cholinergic motor neuron M4. Activates expression of growth factor, neuropeptide and transcription factor genes, such as TGF-beta dbl-1, FMRFamide-like flp-5 and transcription repressor zag-1, in the M4 neuron. Required for pharynx peristalsis. The sequence is that of Homeobox protein ceh-28 from Caenorhabditis elegans.